Consider the following 247-residue polypeptide: MGRGRVQLKRIENKISRQVTFSKRRSGLLKKAHEISVLCDAEVALIVFSTKGKLFEYSSDSSMERILERYERYSLSERQLLSTDPDPQGNWSMDYPKLTARIEVLQRNLRHFVGEDLDPLSLRELQNLEQQLDTALKRIRTRKNQLMHESISELQKKEKSLVEQNNALAKKVKEKEKVEQNNRAQWEQQNNIGQNSSAYVVPPPPLQLPSLTIGGSFVGRAVEEDGAEARPSPNTLMPPWMLRHVNE.

In terms of domain architecture, MADS-box spans 1–61; that stretch reads MGRGRVQLKR…GKLFEYSSDS (61 aa). Residues 88–178 form the K-box domain; that stretch reads QGNWSMDYPK…AKKVKEKEKV (91 aa). The disordered stretch occupies residues 224-247; the sequence is EDGAEARPSPNTLMPPWMLRHVNE.

In terms of tissue distribution, expressed in tendrils and flowers.

It is found in the nucleus. Probable transcription factor involved in flower development. In Vitis vinifera (Grape), this protein is Agamous-like MADS-box protein FUL-L.